Consider the following 78-residue polypeptide: Large ribosomal subunit protein bL28 (78 aa).

Residues 1-25 are disordered; sequence MSRVCQVTGKRPTVGNNRSHARNAT.

Belongs to the bacterial ribosomal protein bL28 family.

The sequence is that of Large ribosomal subunit protein bL28 from Alteromonas mediterranea (strain DSM 17117 / CIP 110805 / LMG 28347 / Deep ecotype).